Here is a 459-residue protein sequence, read N- to C-terminus: Xylose/arabinose-binding protein XacG (459 aa).

Residues 19–36 form a helical membrane-spanning segment; sequence ALTVGAAAGIAGCTGGGG. Positions 27–68 are disordered; the sequence is GIAGCTGGGGTETESTESGNGNGSGGSTDDTETSGSSSGESW.

Belongs to the bacterial solute-binding protein 1 family. In terms of assembly, the complex is composed of two ATP-binding proteins (XacJ and XacK), two transmembrane proteins (XacH and XacI) and a solute-binding protein (XacG).

It localises to the cell membrane. Its function is as follows. Part of the ABC transporter complex XacGHIJK involved in the uptake of xylose and arabinose. This chain is Xylose/arabinose-binding protein XacG, found in Haloferax volcanii (strain ATCC 29605 / DSM 3757 / JCM 8879 / NBRC 14742 / NCIMB 2012 / VKM B-1768 / DS2) (Halobacterium volcanii).